A 378-amino-acid polypeptide reads, in one-letter code: Cytochrome b (378 aa).

Transmembrane regions (helical) follow at residues 34 to 54 (FGSL…FLAM), 78 to 99 (WFLR…FMHV), 114 to 134 (WNTG…GYVL), and 179 to 199 (FFTF…IHLL). Heme b is bound by residues histidine 84 and histidine 98. Heme b-binding residues include histidine 183 and histidine 197. Position 202 (histidine 202) interacts with a ubiquinone. 4 helical membrane-spanning segments follow: residues 227-247 (YKDI…IWKF), 289-309 (LGGV…PFTH), 321-341 (LNQI…WIGA), and 348-368 (YVLT…INPL).

Belongs to the cytochrome b family. As to quaternary structure, the main subunits of complex b-c1 are: cytochrome b, cytochrome c1 and the Rieske protein. The cofactor is heme b.

It localises to the mitochondrion inner membrane. Its function is as follows. Component of the ubiquinol-cytochrome c reductase complex (complex III or cytochrome b-c1 complex) that is part of the mitochondrial respiratory chain. The b-c1 complex mediates electron transfer from ubiquinol to cytochrome c. Contributes to the generation of a proton gradient across the mitochondrial membrane that is then used for ATP synthesis. The protein is Cytochrome b (MT-CYB) of Anopheles quadrimaculatus (Common malaria mosquito).